The following is a 953-amino-acid chain: MMSSLSVEGMLLKSARESCLPARVNQRRNGDLRRLNHHRQSSFVRCLTPARVSRPELRSSGLTPPRAVLNPVSPPVTTAKKRVFTFGKGRSEGNRDMKSLLGGKGANLAEMSSIGLSVPPGLTISTEACEEYQQNGKSLPPGLWDEISEGLDYVQKEMSASLGDPSKPLPLSVRSGAAISMPGMMDTVLNLGLNDEVVAGLAGKSGARFAYDSYRRFLDMFGNVVMGIPHSLFDEKLEQMKAEKGIHLDTDLTAADLKDLVEKYKNVYVEAKGEKFPTDPKKQLELAVNAVFDSWDSPRANKYRSINQITGLKGTAVNIQSMVFGNMGNTSGTGVLFTRNPSTGEKKLYGEFLINAQGEDVVAGIRTPEDLGTMETCMPDAYKELVENCEILEGHYKDMMDIEFTVQENRLWMLQCRTGKRTGKGAVRIAVDMVNEWLIDTRTAIKRVETQHLDQLLHPQFEDPSAYKSHVVATGLPASPGAAVGQVCFSAEDAETWHAQGKSAILVRTETSPEDVGGMHAAAGILTARGGMTSHAAVVARGWGKCCVSGCADIRVNDDMKIFTIGDRVIKEGDWLSLNGTTGEVILGKQLLAPPAMSNDLEIFMSWADQARRLKVMANADTPNDALTARNNGAQGIGLCRTEHMFFASDERIKAVRKMIMAVTPEQRKVALDLLLPYQRSDFEGIFRAMDGLPVTIRLLDPPLHEFLPEGDLEHIVNELAVDTGMSADEIYSKIENLSEVNPMLGFRGCRLGISYPELTEMQVRAIFQAAVSMTNQGVTVIPEIMVPLVGTPQELRHQISVIRGVAANVFAEMGVTLEYKVGTMIEIPRAALIAEEIGKEADFFSFGTNDLTQMTFGYSRDDVGKFLQIYLAQGILQHDPFEVIDQKGVGQLIKMATEKGRAANPNLKVGICGEHGGEPSSVAFFDGVGLDYVSCSPFRVPIARLAAAQVIV.

The N-terminal 77 residues, 1 to 77, are a transit peptide targeting the chloroplast; sequence MMSSLSVEGM…VLNPVSPPVT (77 aa). The disordered stretch occupies residues 55-74; it reads PELRSSGLTPPRAVLNPVSP. T533 is modified (phosphothreonine; by PDRP1). Residue H535 is the Tele-phosphohistidine intermediate of the active site. 7 residues coordinate substrate: R641, R698, E827, G848, T849, N850, and D851. E827 is a Mg(2+) binding site. D851 contributes to the Mg(2+) binding site. Catalysis depends on C913, which acts as the Proton donor.

The protein belongs to the PEP-utilizing enzyme family. As to quaternary structure, homotetramer. Mg(2+) serves as cofactor. In terms of processing, phosphorylation of Thr-533 in the dark inactivates the enzyme. Dephosphorylation upon light stimulation reactivates the enzyme.

The protein localises to the plastid. Its subcellular location is the chloroplast. It carries out the reaction pyruvate + phosphate + ATP = phosphoenolpyruvate + AMP + diphosphate + H(+). Its pathway is photosynthesis; C4 acid pathway. Its activity is regulated as follows. Activated by light-induced dephosphorylation. Inhibited by dark-induced phosphorylation. Both reactions are catalyzed by PDRP1. Inactivated by cold due to the dissociation of the homotetramer. Its function is as follows. Formation of phosphoenolpyruvate, which is the primary acceptor of CO(2) in C4 and some Crassulacean acid metabolism plants. The polypeptide is Pyruvate, phosphate dikinase, chloroplastic (Flaveria bidentis (Coastal plain yellowtops)).